The following is a 318-amino-acid chain: Pantothenate synthetase (318 aa).

44–51 (MGALHQGH) provides a ligand contact to ATP. The Proton donor role is filled by H51. (R)-pantoate is bound at residue Q75. Residue Q75 participates in beta-alanine binding. ATP is bound at residue 161-164 (GEKD). Q167 is a binding site for (R)-pantoate. Residues V190 and 198 to 201 (LSSR) each bind ATP. The tract at residues 295–318 (DGHPNLDSQPEPAGTDPALLPPAR) is disordered.

It belongs to the pantothenate synthetase family. Homodimer.

The protein localises to the cytoplasm. It carries out the reaction (R)-pantoate + beta-alanine + ATP = (R)-pantothenate + AMP + diphosphate + H(+). It functions in the pathway cofactor biosynthesis; (R)-pantothenate biosynthesis; (R)-pantothenate from (R)-pantoate and beta-alanine: step 1/1. Its function is as follows. Catalyzes the condensation of pantoate with beta-alanine in an ATP-dependent reaction via a pantoyl-adenylate intermediate. In Nocardia farcinica (strain IFM 10152), this protein is Pantothenate synthetase.